Consider the following 247-residue polypeptide: Epidermal cell differentiation inhibitor (247 aa).

The signal sequence occupies residues 1 to 35 (MKNKLLFKIFLSLSLALSVYSINDKIIEVSNTSLA). The region spanning 39–247 (KNFTDLDEAT…IIITAIVFKK (209 aa)) is the TR mART core domain. Catalysis depends on residues R120, S173, and E215.

This sequence to ADP-ribosyltransferase C3 of Clostridium.

Functionally, inhibits terminal differentiation of cultured mouse keratinocytes. In culture, also inhibits the differentiation of human keratinocytes. Probable ADP-ribosyltransferase. This Staphylococcus aureus protein is Epidermal cell differentiation inhibitor.